The primary structure comprises 393 residues: ATP phosphoribosyltransferase regulatory subunit (393 aa).

The protein belongs to the class-II aminoacyl-tRNA synthetase family. HisZ subfamily. Heteromultimer composed of HisG and HisZ subunits.

It localises to the cytoplasm. The protein operates within amino-acid biosynthesis; L-histidine biosynthesis; L-histidine from 5-phospho-alpha-D-ribose 1-diphosphate: step 1/9. Required for the first step of histidine biosynthesis. May allow the feedback regulation of ATP phosphoribosyltransferase activity by histidine. The polypeptide is ATP phosphoribosyltransferase regulatory subunit (Nitrosospira multiformis (strain ATCC 25196 / NCIMB 11849 / C 71)).